The primary structure comprises 184 residues: Large ribosomal subunit protein uL10 (184 aa).

The protein belongs to the universal ribosomal protein uL10 family. Part of the ribosomal stalk of the 50S ribosomal subunit. The N-terminus interacts with L11 and the large rRNA to form the base of the stalk. The C-terminus forms an elongated spine to which L12 dimers bind in a sequential fashion forming a multimeric L10(L12)X complex.

In terms of biological role, forms part of the ribosomal stalk, playing a central role in the interaction of the ribosome with GTP-bound translation factors. The protein is Large ribosomal subunit protein uL10 of Gluconobacter oxydans (strain 621H) (Gluconobacter suboxydans).